A 246-amino-acid chain; its full sequence is Probable phosphatase ASA_1316 (246 aa).

Zn(2+)-binding residues include His8, His10, His16, His41, Glu74, His102, His132, Asp193, and His195.

The protein belongs to the PHP family. Zn(2+) is required as a cofactor.

The chain is Probable phosphatase ASA_1316 from Aeromonas salmonicida (strain A449).